A 403-amino-acid polypeptide reads, in one-letter code: Leu/Ile/Val-binding protein homolog 8 (403 aa).

The signal sequence occupies residues Met1–Ala26.

This sequence belongs to the leucine-binding protein family.

Its function is as follows. Component of an amino-acid transport system. This is Leu/Ile/Val-binding protein homolog 8 from Brucella suis biovar 1 (strain 1330).